Reading from the N-terminus, the 521-residue chain is Lymphocyte activation gene 3 protein (521 aa).

Positions 1-23 (MREDLLLGFLLLGLLWEAPVVSS) are cleaved as a signal peptide. Residues 24–442 (GPGKELPVVW…ISGDLKGGHL (419 aa)) lie on the Extracellular side of the membrane. The Ig-like V-type domain maps to 37 to 163 (GAPVHLPCSL…LSCSLRLRVG (127 aa)). The interval 37–246 (GAPVHLPCSL…LTYRDGFNVS (210 aa)) is interaction with FGL1. Residues cysteine 44 and cysteine 156 are joined by a disulfide bond. 3 Ig-like C2-type domains span residues 165 to 246 (ASMI…FNVS), 258 to 341 (PVAP…ATVT), and 345 to 412 (ITVT…EGQR). Residue asparagine 184 is glycosylated (N-linked (GlcNAc...) asparagine). The cysteines at positions 185 and 235 are disulfide-linked. N-linked (GlcNAc...) asparagine glycans are attached at residues asparagine 244, asparagine 309, asparagine 337, and asparagine 381. Cysteine 276 and cysteine 327 form a disulfide bridge. A disulfide bridge links cysteine 363 with cysteine 405. Residues 422–442 (ESSSGAHSARRISGDLKGGHL) are connecting peptide. The helical transmembrane segment at 443–463 (VLVLILGALSLFLLVAGAFGF) threads the bilayer. At 464–521 (HWWRKQLLLRRFSALEHGIQPFPAQRKIEELERELETEMGQEPEPEPEPQLEPEPRQL) the chain is on the cytoplasmic side. The KIEELE motif signature appears at 490-495 (KIEELE). The interval 493 to 518 (ELERELETEMGQEPEPEPEPQLEPEP) is 13 X 2 AA tandem repeats of E-X. Residues 493 to 521 (ELERELETEMGQEPEPEPEPQLEPEPRQL) are disordered. Positions 500–514 (TEMGQEPEPEPEPQL) are enriched in acidic residues.

It belongs to the LAG3 family. As to quaternary structure, interacts with MHC class II (MHC-II); selectively recognizes stable complexes of peptide and MHC-II. Interacts with FGL1 (via the Fibrinogen C-terminal domain). In terms of processing, proteolytically cleaved by ADAM10 and ADAM17 within the connecting peptide region, leading to release of Secreted lymphocyte activation gene 3 protein (sLAG-3). ADAM10 mediates constitutive cleavage, but cleavage increases following T-cell activation, whereas shedding by ADAM17 is induced by TCR signaling in a PRKCQ-dependent manner. Primarily expressed in activated CD4(+) and CD8(+) T-cells. Also expressed in a subset of regulatory T-cells (Tregs), such as natural CD4(+)CD25(+) Tregs. Also expressed on plasmacytoid dendritic cells (pDCs).

It localises to the cell membrane. Its subcellular location is the secreted. Functionally, lymphocyte activation gene 3 protein: Inhibitory receptor on antigen activated T-cells. Delivers inhibitory signals upon binding to ligands, such as FGL1. FGL1 constitutes a major ligand of LAG3 and is responsible for LAG3 T-cell inhibitory function. Following TCR engagement, LAG3 associates with CD3-TCR in the immunological synapse and directly inhibits T-cell activation. May inhibit antigen-specific T-cell activation in synergy with PDCD1/PD-1, possibly by acting as a coreceptor for PDCD1/PD-1. Negatively regulates the proliferation, activation, effector function and homeostasis of both CD8(+) and CD4(+) T-cells. Also mediates immune tolerance: constitutively expressed on a subset of regulatory T-cells (Tregs) and contributes to their suppressive function. Also acts as a negative regulator of plasmacytoid dendritic cell (pDCs) activation. Binds MHC class II (MHC-II); the precise role of MHC-II-binding is however unclear. May function as a ligand for MHC class II (MHC-II) on antigen-presenting cells (APC), promoting APC activation/maturation and driving Th1 immune response. The chain is Lymphocyte activation gene 3 protein from Mus musculus (Mouse).